A 204-amino-acid polypeptide reads, in one-letter code: MSQMQARTMAFAGILQALAQVQYIARHGDSDTDAMAASFNTIMVTNPEQPEDVYADKDQLRVGYKWILNQLGDGESKDVEMTRYLVGLLALERKLSRSNAALGMLSERINQIHRQLNHFAITDEQVIANLASIYSDIISNLGPKLQITGNPNVLQRPLVQQKIRALLLAAMRSAVLWRQLGGKRRHLVFARKAIVDTAKKNLTL.

It belongs to the HflD family.

The protein resides in the cytoplasm. Its subcellular location is the cell inner membrane. In Shewanella amazonensis (strain ATCC BAA-1098 / SB2B), this protein is High frequency lysogenization protein HflD homolog.